We begin with the raw amino-acid sequence, 1220 residues long: ATP-dependent helicase/nuclease subunit A (1220 aa).

Positions 9–473 (VIWTDDQWKS…IDLSQNFRSR (465 aa)) constitute a UvrD-like helicase ATP-binding domain. 30–37 (AAAGSGKT) is a binding site for ATP. One can recognise a UvrD-like helicase C-terminal domain in the interval 474-782 (PEVLSTTNYL…RMMTIHASKG (309 aa)).

Belongs to the helicase family. AddA subfamily. As to quaternary structure, heterodimer of AddA and AddB/RexB. It depends on Mg(2+) as a cofactor.

It carries out the reaction Couples ATP hydrolysis with the unwinding of duplex DNA by translocating in the 3'-5' direction.. It catalyses the reaction ATP + H2O = ADP + phosphate + H(+). The heterodimer acts as both an ATP-dependent DNA helicase and an ATP-dependent, dual-direction single-stranded exonuclease. Recognizes the chi site generating a DNA molecule suitable for the initiation of homologous recombination. The AddA nuclease domain is required for chi fragment generation; this subunit has the helicase and 3' -&gt; 5' nuclease activities. The polypeptide is ATP-dependent helicase/nuclease subunit A (Staphylococcus carnosus (strain TM300)).